We begin with the raw amino-acid sequence, 276 residues long: Large ribosomal subunit protein uL2 (276 aa).

Disordered stretches follow at residues 14–58 (RNAS…GGGH) and 221–276 (TRGE…KNRK). The segment covering 16–27 (ASVSDFSELTRS) has biased composition (polar residues). Basic residues predominate over residues 255-276 (RRPKKASNKMIVRRRPSGKNRK).

Belongs to the universal ribosomal protein uL2 family. In terms of assembly, part of the 50S ribosomal subunit. Forms a bridge to the 30S subunit in the 70S ribosome.

In terms of biological role, one of the primary rRNA binding proteins. Required for association of the 30S and 50S subunits to form the 70S ribosome, for tRNA binding and peptide bond formation. It has been suggested to have peptidyltransferase activity; this is somewhat controversial. Makes several contacts with the 16S rRNA in the 70S ribosome. This chain is Large ribosomal subunit protein uL2, found in Bifidobacterium longum subsp. infantis (strain ATCC 15697 / DSM 20088 / JCM 1222 / NCTC 11817 / S12).